A 136-amino-acid chain; its full sequence is Probable glycine cleavage system H protein 3 (136 aa).

A Lipoyl-binding domain is found at 28–109 (MVTVGITSLG…PYDAWIVKIK (82 aa)). An N6-lipoyllysine modification is found at Lys69.

It belongs to the GcvH family. The glycine cleavage system is composed of four proteins: P, T, L and H. The cofactor is (R)-lipoate.

The glycine cleavage system catalyzes the degradation of glycine. The H protein shuttles the methylamine group of glycine from the P protein to the T protein. This Sulfurisphaera tokodaii (strain DSM 16993 / JCM 10545 / NBRC 100140 / 7) (Sulfolobus tokodaii) protein is Probable glycine cleavage system H protein 3.